We begin with the raw amino-acid sequence, 189 residues long: MTTEVELVVLADSEGNPIGTAPKATVHTKDTPLHFAFSTYILNPRGELLVTRRALSKKTWPGVWTNSMCGHPGPDETNADAIRRRGVDELGLEVDSFLDIQEILPDYQYRAVDASGIVEWELCPVHLVRLAVGEFVEPLDDEVEEFEWAEPQKLFDAVDATPFVFSPWLVDQLSAPELRQAILEAFDAE.

Positions 27 and 34 each coordinate Mn(2+). The region spanning 32–171 (PLHFAFSTYI…PFVFSPWLVD (140 aa)) is the Nudix hydrolase domain. Cysteine 69 is an active-site residue. Cysteine 69 contacts Mg(2+). Residue histidine 71 participates in Mn(2+) binding. A Mg(2+)-binding site is contributed by glutamate 89. Mn(2+) is bound by residues glutamate 119 and glutamate 121. The active site involves glutamate 121.

Belongs to the IPP isomerase type 1 family. Requires Mg(2+) as cofactor. Mn(2+) serves as cofactor.

It localises to the cytoplasm. The catalysed reaction is isopentenyl diphosphate = dimethylallyl diphosphate. It functions in the pathway isoprenoid biosynthesis; dimethylallyl diphosphate biosynthesis; dimethylallyl diphosphate from isopentenyl diphosphate: step 1/1. Catalyzes the 1,3-allylic rearrangement of the homoallylic substrate isopentenyl (IPP) to its highly electrophilic allylic isomer, dimethylallyl diphosphate (DMAPP). This is Isopentenyl-diphosphate Delta-isomerase from Corynebacterium glutamicum (strain ATCC 13032 / DSM 20300 / JCM 1318 / BCRC 11384 / CCUG 27702 / LMG 3730 / NBRC 12168 / NCIMB 10025 / NRRL B-2784 / 534).